The following is a 138-amino-acid chain: Basic phospholipase A2 Tpu-G6D49 (138 aa).

Residues 1 to 16 (MRTLWIMAVLLVGVEG) form the signal peptide. 7 disulfide bridges follow: Cys-42–Cys-131, Cys-44–Cys-60, Cys-59–Cys-111, Cys-65–Cys-138, Cys-66–Cys-104, Cys-73–Cys-97, and Cys-91–Cys-102. Tyr-43, Gly-45, and Gly-47 together coordinate Ca(2+). The active site involves His-63. Residue Asp-64 participates in Ca(2+) binding. The active site involves Asp-105.

Monomer. It depends on Ca(2+) as a cofactor. As to expression, expressed by the venom gland.

The protein localises to the secreted. The enzyme catalyses a 1,2-diacyl-sn-glycero-3-phosphocholine + H2O = a 1-acyl-sn-glycero-3-phosphocholine + a fatty acid + H(+). Functionally, snake venom phospholipase A2 (PLA2) that impairs hemostasis. It weakly inhibits ADP-induced platelet aggregation when tested on platelet rich plasma from human and rabbit blood (15-25% of inhibition at 5-10 ug of enzyme), and dose-dependently inhibits blood coagulation, possibly by inhibiting thrombin activation. Also induces local edema a few hours after injection in the hind foot. Exhibits high hydrolytic activities toward L-dipalmitoyl phosphatidylcholine. PLA2 catalyzes the calcium-dependent hydrolysis of the 2-acyl groups in 3-sn-phosphoglycerides. This is Basic phospholipase A2 Tpu-G6D49 from Craspedocephalus puniceus (Flat-nosed pitviper).